A 512-amino-acid polypeptide reads, in one-letter code: ATP synthase subunit alpha, chloroplastic (512 aa).

Residue 170–177 participates in ATP binding; it reads GDRQTGKT.

It belongs to the ATPase alpha/beta chains family. F-type ATPases have 2 components, CF(1) - the catalytic core - and CF(0) - the membrane proton channel. CF(1) has five subunits: alpha(3), beta(3), gamma(1), delta(1), epsilon(1). CF(0) has four main subunits: a, b, b' and c.

It localises to the plastid. It is found in the chloroplast thylakoid membrane. The enzyme catalyses ATP + H2O + 4 H(+)(in) = ADP + phosphate + 5 H(+)(out). In terms of biological role, produces ATP from ADP in the presence of a proton gradient across the membrane. The alpha chain is a regulatory subunit. In Staurastrum punctulatum (Green alga), this protein is ATP synthase subunit alpha, chloroplastic.